The primary structure comprises 280 residues: Large ribosomal subunit protein uL2 (280 aa).

Disordered regions lie at residues 32 to 54 and 221 to 280; these read SLLV…SRHM and RGMA…DSKK. Residues 37–49 are compositionally biased toward polar residues; sequence NKSTGGRNNNGRV. Gly residues predominate over residues 232-242; sequence MGGGEGKSKSG. Basic residues predominate over residues 257-280; the sequence is KGLKTRKRKKASSKLIVRRRDSKK.

This sequence belongs to the universal ribosomal protein uL2 family. In terms of assembly, part of the 50S ribosomal subunit. Forms a bridge to the 30S subunit in the 70S ribosome.

One of the primary rRNA binding proteins. Required for association of the 30S and 50S subunits to form the 70S ribosome, for tRNA binding and peptide bond formation. It has been suggested to have peptidyltransferase activity; this is somewhat controversial. Makes several contacts with the 16S rRNA in the 70S ribosome. The polypeptide is Large ribosomal subunit protein uL2 (Chloroherpeton thalassium (strain ATCC 35110 / GB-78)).